The sequence spans 313 residues: Olfactory receptor 8B3 (313 aa).

Over 1–25 (MLARNNSLVTEFILAGLTDHPEFQQ) the chain is Extracellular. A glycan (N-linked (GlcNAc...) asparagine) is linked at Asn-5. The chain crosses the membrane as a helical span at residues 26 to 46 (PLFFLFLVVYIVTMVGNLGLI). Residues 47–54 (ILFGLNSH) are Cytoplasmic-facing. A helical transmembrane segment spans residues 55–75 (LHTPMYYFLFNLSFIDLCYSS). Residues 76–99 (VFTPKMLMNFVSKKNIISYVGCMT) lie on the Extracellular side of the membrane. The cysteines at positions 97 and 189 are disulfide-linked. A helical transmembrane segment spans residues 100–120 (QLFFFLFFVISECYMLTSMAY). The Cytoplasmic portion of the chain corresponds to 121 to 139 (DRYVAICNPLLYKVTMSHQ). Residues 140 to 160 (VCSMLTFAAYIMGLAGATAHT) traverse the membrane as a helical segment. The Extracellular segment spans residues 161–197 (GCMLRLTFCSANIINHYLCDILPLLQLSCTSTYVNEV). Residues 198-217 (VVLIVVGINIMVPSCTILIS) traverse the membrane as a helical segment. Over 218-237 (YVFIVTSILHIKSTQGRSKA) the chain is Cytoplasmic. The helical transmembrane segment at 238–258 (FSTCSSHVIALSLFFGSAAFM) threads the bilayer. Topologically, residues 259 to 270 (YIKYSSGSMEQG) are extracellular. Residues 271-291 (KVSSVFYTNVVPMLNPLIYSL) traverse the membrane as a helical segment. Over 292 to 313 (RNKDVKVALRKALIKIQRRNIF) the chain is Cytoplasmic.

The protein belongs to the G-protein coupled receptor 1 family.

The protein localises to the cell membrane. Functionally, odorant receptor. The polypeptide is Olfactory receptor 8B3 (OR8B3) (Homo sapiens (Human)).